The chain runs to 65 residues: Small, acid-soluble spore protein H 3 (65 aa).

Belongs to the SspH family.

It is found in the spore core. In Geobacillus thermodenitrificans (strain NG80-2), this protein is Small, acid-soluble spore protein H 3.